The primary structure comprises 402 residues: Imidazolonepropionase (402 aa).

Residues His-66 and His-68 each contribute to the Fe(3+) site. Residues His-66 and His-68 each coordinate Zn(2+). Arg-75, Tyr-138, and His-171 together coordinate 4-imidazolone-5-propanoate. Residue Tyr-138 participates in N-formimidoyl-L-glutamate binding. His-236 contacts Fe(3+). His-236 contributes to the Zn(2+) binding site. Gln-239 serves as a coordination point for 4-imidazolone-5-propanoate. Fe(3+) is bound at residue Asp-311. Asp-311 contributes to the Zn(2+) binding site. Residues Asn-313 and Gly-315 each coordinate N-formimidoyl-L-glutamate. Residue Thr-316 coordinates 4-imidazolone-5-propanoate.

The protein belongs to the metallo-dependent hydrolases superfamily. HutI family. Requires Zn(2+) as cofactor. Fe(3+) is required as a cofactor.

Its subcellular location is the cytoplasm. The enzyme catalyses 4-imidazolone-5-propanoate + H2O = N-formimidoyl-L-glutamate. Its pathway is amino-acid degradation; L-histidine degradation into L-glutamate; N-formimidoyl-L-glutamate from L-histidine: step 3/3. In terms of biological role, catalyzes the hydrolytic cleavage of the carbon-nitrogen bond in imidazolone-5-propanoate to yield N-formimidoyl-L-glutamate. It is the third step in the universal histidine degradation pathway. The protein is Imidazolonepropionase of Pseudomonas aeruginosa (strain ATCC 15692 / DSM 22644 / CIP 104116 / JCM 14847 / LMG 12228 / 1C / PRS 101 / PAO1).